The chain runs to 284 residues: Shikimate dehydrogenase (NADP(+)) (284 aa).

Shikimate-binding positions include S20–S22 and S67. Residue K71 is the Proton acceptor of the active site. An NADP(+)-binding site is contributed by D83. Residues N92 and D107 each contribute to the shikimate site. NADP(+) is bound by residues G129–A133 and I227. Y229 contributes to the shikimate binding site. Position 250 (G250) interacts with NADP(+).

It belongs to the shikimate dehydrogenase family. Homodimer.

The catalysed reaction is shikimate + NADP(+) = 3-dehydroshikimate + NADPH + H(+). Its pathway is metabolic intermediate biosynthesis; chorismate biosynthesis; chorismate from D-erythrose 4-phosphate and phosphoenolpyruvate: step 4/7. Functionally, involved in the biosynthesis of the chorismate, which leads to the biosynthesis of aromatic amino acids. Catalyzes the reversible NADPH linked reduction of 3-dehydroshikimate (DHSA) to yield shikimate (SA). This is Shikimate dehydrogenase (NADP(+)) from Streptococcus pneumoniae (strain 70585).